The sequence spans 311 residues: Protein translocase subunit SecF (311 aa).

6 helical membrane passes run 23 to 42 (VSYSFSIILSLISLIWISIY), 140 to 160 (IEAGAMAMLFSFLAIMVYIGV), 164 to 184 (WYFGFGILIALVHDVILALGF), 194 to 214 (LSTIAAVLTIIGYSVNDSVVI), 246 to 266 (ILTVITTLLANLALILFGGKA), and 272 to 292 (VLVFFGIIAGTYSSIFISAPI).

The protein belongs to the SecD/SecF family. SecF subfamily. Forms a complex with SecD. Part of the essential Sec protein translocation apparatus which comprises SecA, SecYEG and auxiliary proteins SecDF-YajC and YidC.

It is found in the cell inner membrane. Part of the Sec protein translocase complex. Interacts with the SecYEG preprotein conducting channel. SecDF uses the proton motive force (PMF) to complete protein translocation after the ATP-dependent function of SecA. This is Protein translocase subunit SecF from Rickettsia prowazekii (strain Madrid E).